We begin with the raw amino-acid sequence, 208 residues long: ATP-dependent Clp protease proteolytic subunit (208 aa).

S112 serves as the catalytic Nucleophile. Residue H137 is part of the active site.

It belongs to the peptidase S14 family. In terms of assembly, fourteen ClpP subunits assemble into 2 heptameric rings which stack back to back to give a disk-like structure with a central cavity, resembling the structure of eukaryotic proteasomes.

The protein resides in the cytoplasm. It carries out the reaction Hydrolysis of proteins to small peptides in the presence of ATP and magnesium. alpha-casein is the usual test substrate. In the absence of ATP, only oligopeptides shorter than five residues are hydrolyzed (such as succinyl-Leu-Tyr-|-NHMec, and Leu-Tyr-Leu-|-Tyr-Trp, in which cleavage of the -Tyr-|-Leu- and -Tyr-|-Trp bonds also occurs).. Functionally, cleaves peptides in various proteins in a process that requires ATP hydrolysis. Has a chymotrypsin-like activity. Plays a major role in the degradation of misfolded proteins. The chain is ATP-dependent Clp protease proteolytic subunit from Buchnera aphidicola subsp. Acyrthosiphon pisum (strain APS) (Acyrthosiphon pisum symbiotic bacterium).